Consider the following 410-residue polypeptide: Na(+)-translocating NADH-quinone reductase subunit B (410 aa).

The next 3 helical transmembrane spans lie at methionine 56–glycine 76, leucine 119–tryptophan 139, and serine 159–isoleucine 179. Threonine 232 carries the FMN phosphoryl threonine modification. A run of 5 helical transmembrane segments spans residues glycine 266–alanine 286, isoleucine 293–serine 313, methionine 318–phenylalanine 338, serine 347–isoleucine 367, and glycine 377–alanine 397.

Belongs to the NqrB/RnfD family. Composed of six subunits; NqrA, NqrB, NqrC, NqrD, NqrE and NqrF. The cofactor is FMN.

The protein resides in the cell inner membrane. It carries out the reaction a ubiquinone + n Na(+)(in) + NADH + H(+) = a ubiquinol + n Na(+)(out) + NAD(+). Its function is as follows. NQR complex catalyzes the reduction of ubiquinone-1 to ubiquinol by two successive reactions, coupled with the transport of Na(+) ions from the cytoplasm to the periplasm. NqrA to NqrE are probably involved in the second step, the conversion of ubisemiquinone to ubiquinol. This chain is Na(+)-translocating NADH-quinone reductase subunit B, found in Neisseria meningitidis serogroup B (strain ATCC BAA-335 / MC58).